We begin with the raw amino-acid sequence, 152 residues long: Protein FYV5 (152 aa).

The next 5 helical transmembrane spans lie at 26 to 46, 56 to 76, 82 to 102, 106 to 126, and 127 to 147; these read IISI…RICS, LISS…SCVL, VGII…VLFL, LIDL…TPFF, and FMLH…YLII.

It localises to the cell membrane. Its subcellular location is the secreted. The protein resides in the cell wall. Involved in maintaining an adequate ionic strength homeostasis of the cellular aqueous environment, necessary for normal growth rate. Required for survival upon exposure to K1 killer toxin and hence plays a role in cell wall glucan synthesis. Required for dithiothreitol (DTT) resistance. Involved in cell cycle progression. This chain is Protein FYV5 (FYV5), found in Saccharomyces cerevisiae (strain ATCC 204508 / S288c) (Baker's yeast).